Here is a 184-residue protein sequence, read N- to C-terminus: NADH-quinone oxidoreductase subunit B (184 aa).

4 residues coordinate [4Fe-4S] cluster: C63, C64, C128, and C158.

Belongs to the complex I 20 kDa subunit family. NDH-1 is composed of 14 different subunits. Subunits NuoB, C, D, E, F, and G constitute the peripheral sector of the complex. Requires [4Fe-4S] cluster as cofactor.

It localises to the cell inner membrane. The catalysed reaction is a quinone + NADH + 5 H(+)(in) = a quinol + NAD(+) + 4 H(+)(out). NDH-1 shuttles electrons from NADH, via FMN and iron-sulfur (Fe-S) centers, to quinones in the respiratory chain. The immediate electron acceptor for the enzyme in this species is believed to be ubiquinone. Couples the redox reaction to proton translocation (for every two electrons transferred, four hydrogen ions are translocated across the cytoplasmic membrane), and thus conserves the redox energy in a proton gradient. The sequence is that of NADH-quinone oxidoreductase subunit B from Xanthomonas axonopodis pv. citri (strain 306).